Here is a 610-residue protein sequence, read N- to C-terminus: Elongation factor 4 (610 aa).

In terms of domain architecture, tr-type G spans 11–193 (EKIRNFSIIA…QIVEKVPAPT (183 aa)). GTP is bound by residues 23 to 28 (DHGKST) and 140 to 143 (NKID).

This sequence belongs to the TRAFAC class translation factor GTPase superfamily. Classic translation factor GTPase family. LepA subfamily.

The protein resides in the cell membrane. The enzyme catalyses GTP + H2O = GDP + phosphate + H(+). Its function is as follows. Required for accurate and efficient protein synthesis under certain stress conditions. May act as a fidelity factor of the translation reaction, by catalyzing a one-codon backward translocation of tRNAs on improperly translocated ribosomes. Back-translocation proceeds from a post-translocation (POST) complex to a pre-translocation (PRE) complex, thus giving elongation factor G a second chance to translocate the tRNAs correctly. Binds to ribosomes in a GTP-dependent manner. The polypeptide is Elongation factor 4 (Streptococcus pyogenes serotype M49 (strain NZ131)).